Here is a 199-residue protein sequence, read N- to C-terminus: ATP-dependent Clp protease proteolytic subunit (199 aa).

Residue Ser97 is the Nucleophile of the active site. Residue His122 is part of the active site.

The protein belongs to the peptidase S14 family. In terms of assembly, fourteen ClpP subunits assemble into 2 heptameric rings which stack back to back to give a disk-like structure with a central cavity, resembling the structure of eukaryotic proteasomes.

It is found in the cytoplasm. It carries out the reaction Hydrolysis of proteins to small peptides in the presence of ATP and magnesium. alpha-casein is the usual test substrate. In the absence of ATP, only oligopeptides shorter than five residues are hydrolyzed (such as succinyl-Leu-Tyr-|-NHMec, and Leu-Tyr-Leu-|-Tyr-Trp, in which cleavage of the -Tyr-|-Leu- and -Tyr-|-Trp bonds also occurs).. In terms of biological role, cleaves peptides in various proteins in a process that requires ATP hydrolysis. Has a chymotrypsin-like activity. Plays a major role in the degradation of misfolded proteins. This chain is ATP-dependent Clp protease proteolytic subunit, found in Geotalea daltonii (strain DSM 22248 / JCM 15807 / FRC-32) (Geobacter daltonii).